Here is a 396-residue protein sequence, read N- to C-terminus: Gamma-D-glutamyl-L-diamino acid endopeptidase 1 (396 aa).

LysM domains follow at residues 1–45 and 51–95; these read MDIL…RIQI and TSYT…TIQV. In terms of domain architecture, Peptidase M14 spans 108–394; that stretch reads QNYDYSMMMN…EALGIFLAGL (287 aa). Zn(2+) contacts are provided by H162 and E165. A substrate-binding site is contributed by D255. A Zn(2+)-binding site is contributed by H307. The Proton donor role is filled by Y347. The active-site Proton donor/acceptor is the E366.

Belongs to the peptidase M14 family. The cofactor is Zn(2+).

The catalysed reaction is Hydrolysis of gamma-D-glutamyl bonds to the L-terminus (position 7) of meso-diaminopimelic acid (meso-A2pm) in 7-(L-Ala-gamma-D-Glu)-meso-A2pm and 7-(L-Ala-gamma-D-Glu)-7-(D-Ala)-meso-A2pm. It is required that the D-terminal amino and carboxy groups of meso-A2pm are unsubstituted.. In terms of biological role, an endopeptidase which hydrolyzes the gamma-D-Glu-(L)meso-diaminopimelic acid bond of L-Ala-gamma-D-Glu-(L)meso-diaminopimelic acid and L-Ala-gamma-D-Glu-(L)meso-diaminopimelic acid(L)-D-Ala peptides. It is active on spore cortex peptidoglycan. The chain is Gamma-D-glutamyl-L-diamino acid endopeptidase 1 from Lysinibacillus sphaericus (Bacillus sphaericus).